The sequence spans 302 residues: Urease accessory protein UreD (302 aa).

Belongs to the UreD family. In terms of assembly, ureD, UreF and UreG form a complex that acts as a GTP-hydrolysis-dependent molecular chaperone, activating the urease apoprotein by helping to assemble the nickel containing metallocenter of UreC. The UreE protein probably delivers the nickel.

It is found in the cytoplasm. Functionally, required for maturation of urease via the functional incorporation of the urease nickel metallocenter. This Pseudoalteromonas translucida (strain TAC 125) protein is Urease accessory protein UreD.